A 141-amino-acid polypeptide reads, in one-letter code: Putative RING-H2 finger protein ATL62 (141 aa).

Residues 14–32 form a helical membrane-spanning segment; it reads FFAILTVFYSIFRCCLAYC. An RING-type; degenerate zinc finger spans residues 79 to 121; it reads CVVCLSKFIDEDKARVLPSCNHCFHFDFTDTWLHSDYTCPNCR.

It belongs to the RING-type zinc finger family. ATL subfamily.

Its subcellular location is the membrane. The catalysed reaction is S-ubiquitinyl-[E2 ubiquitin-conjugating enzyme]-L-cysteine + [acceptor protein]-L-lysine = [E2 ubiquitin-conjugating enzyme]-L-cysteine + N(6)-ubiquitinyl-[acceptor protein]-L-lysine.. It participates in protein modification; protein ubiquitination. This chain is Putative RING-H2 finger protein ATL62 (ATL62), found in Arabidopsis thaliana (Mouse-ear cress).